The primary structure comprises 108 residues: MQRIRKGDKVVVITGKNKGGSGIVLKVLTKQNKAIVEGINKVTVHKKEQVNKRSKQTNPTTKEAPLPLNKLALFDQKAKQQTIGKIKYQIDPKTKQKTRVFKKTNNAI.

The protein belongs to the universal ribosomal protein uL24 family. In terms of assembly, part of the 50S ribosomal subunit.

In terms of biological role, one of two assembly initiator proteins, it binds directly to the 5'-end of the 23S rRNA, where it nucleates assembly of the 50S subunit. One of the proteins that surrounds the polypeptide exit tunnel on the outside of the subunit. The chain is Large ribosomal subunit protein uL24 from Mycoplasma genitalium (strain ATCC 33530 / DSM 19775 / NCTC 10195 / G37) (Mycoplasmoides genitalium).